Consider the following 520-residue polypeptide: Laccase-1 (520 aa).

The first 19 residues, 1–19 (MRLSNALVLVAACISSVVA), serve as a signal peptide directing secretion. 3 Plastocyanin-like domains span residues 21-145 (TRTF…FIVY), 157-305 (VDDE…LTLA), and 375-488 (TVPV…FAEA). Residues His82 and His84 each contribute to the Cu cation site. 2 cysteine pairs are disulfide-bonded: Cys103-Cys509 and Cys135-Cys229. Asn108 carries an N-linked (GlcNAc...) asparagine glycan. Positions 127 and 129 each coordinate Cu cation. 2 N-linked (GlcNAc...) asparagine glycosylation sites follow: Asn239 and Asn299. The Cu cation site is built by His417, His420, His422, His470, Cys471, His472, and His476. An N-linked (GlcNAc...) asparagine glycan is attached at Asn492.

It belongs to the multicopper oxidase family. It depends on Cu cation as a cofactor.

It localises to the secreted. It carries out the reaction 4 hydroquinone + O2 = 4 benzosemiquinone + 2 H2O. In terms of biological role, lignin degradation and detoxification of lignin-derived products. The chain is Laccase-1 (lcc1) from Agaricus bisporus (White button mushroom).